Reading from the N-terminus, the 380-residue chain is 3-dehydroquinate synthase (380 aa).

NAD(+)-binding positions include proline 68–lysine 73, glycine 102–aspartate 106, threonine 126–threonine 127, lysine 139, and lysine 148. Glutamate 181, histidine 243, and histidine 259 together coordinate Zn(2+).

Belongs to the sugar phosphate cyclases superfamily. Dehydroquinate synthase family. NAD(+) is required as a cofactor. Co(2+) serves as cofactor. It depends on Zn(2+) as a cofactor.

It localises to the cytoplasm. The catalysed reaction is 7-phospho-2-dehydro-3-deoxy-D-arabino-heptonate = 3-dehydroquinate + phosphate. Its pathway is metabolic intermediate biosynthesis; chorismate biosynthesis; chorismate from D-erythrose 4-phosphate and phosphoenolpyruvate: step 2/7. Its function is as follows. Catalyzes the conversion of 3-deoxy-D-arabino-heptulosonate 7-phosphate (DAHP) to dehydroquinate (DHQ). The chain is 3-dehydroquinate synthase (aroB) from Chlamydia pneumoniae (Chlamydophila pneumoniae).